Consider the following 350-residue polypeptide: FAD:protein FMN transferase (350 aa).

Residues 1–19 form the signal peptide; that stretch reads MKMTFCRAVCLAAAFLLMG. Cys-20 carries the N-palmitoyl cysteine lipid modification. Cys-20 is lipidated: S-diacylglycerol cysteine. Residues Met-41, Tyr-78, 119–121, and Asp-181 each bind FAD; that span reads AMD. Residue Thr-184 coordinates Mg(2+). The FAD site is built by Glu-187 and Ile-272. Mg(2+) is bound by residues Asp-298, Asp-301, and Thr-302.

This sequence belongs to the ApbE family. Homodimer. It depends on Mg(2+) as a cofactor.

It localises to the cell inner membrane. The enzyme catalyses L-threonyl-[protein] + FAD = FMN-L-threonyl-[protein] + AMP + H(+). In terms of biological role, flavin transferase that catalyzes the transfer of the FMN moiety of FAD and its covalent binding to the hydroxyl group of a threonine residue in a target flavoprotein such as NqrB and NqrC, two subunits of the NQR complex. The polypeptide is FAD:protein FMN transferase (Salmonella typhimurium (strain LT2 / SGSC1412 / ATCC 700720)).